Here is a 58-residue protein sequence, read N- to C-terminus: Small ribosomal subunit protein bS21 (58 aa).

Residues 25–58 are disordered; that stretch reads SKSGTLQEYRKREHYEKPSVKRKKKSEAARKRKF. Residues 32–43 show a composition bias toward basic and acidic residues; sequence EYRKREHYEKPS. A compositionally biased stretch (basic residues) spans 44–58; it reads VKRKKKSEAARKRKF.

It belongs to the bacterial ribosomal protein bS21 family.

The sequence is that of Small ribosomal subunit protein bS21 from Oceanobacillus iheyensis (strain DSM 14371 / CIP 107618 / JCM 11309 / KCTC 3954 / HTE831).